Reading from the N-terminus, the 1483-residue chain is Protein ORF C (1483 aa).

Disordered stretches follow at residues 135–268 (LNDR…GRPP), 306–334 (VPYQ…LRPV), 383–506 (RRRA…FKRH), 518–653 (SIDD…DRNR), 680–911 (RQRR…TSVS), 949–976 (SSDD…RGGS), 1013–1061 (ALQQ…TDLI), and 1089–1299 (FSVA…QPSD). The span at 141–153 (AAGSAQRGSAGSR) shows a compositional bias: low complexity. The segment covering 157–170 (DNLTPTAADTTGAQ) has biased composition (polar residues). 2 stretches are compositionally biased toward low complexity: residues 190-206 (ASNV…RRQQ) and 220-251 (ARQQ…TTAT). The segment covering 252–264 (RQVFEQQGPSTIQ) has biased composition (polar residues). 3 stretches are compositionally biased toward low complexity: residues 424–449 (SGQS…TTGT), 474–483 (SNEPSRQSQS), and 529–541 (TMTQ…STTR). Residues 596–607 (GSVTTTQPSGQL) are compositionally biased toward polar residues. Basic and acidic residues predominate over residues 609–621 (SDDRGRPAPERRQ). A compositionally biased stretch (polar residues) spans 622-640 (QPTSRQTVAQTNIIPNTSG). A compositionally biased stretch (basic and acidic residues) spans 680 to 689 (RQRRETEAEH). Residues 699–710 (TGVTPQRSNNPF) are compositionally biased toward polar residues. Basic and acidic residues predominate over residues 740 to 749 (SLREYRRRDP). The span at 754–774 (GRSYTDGSTTSDGDSSDNSWS) shows a compositional bias: low complexity. The span at 841–876 (NLKSPSPRTKLTRSSSLKSPGTTTRDTQQTSHPLTR) shows a compositional bias: polar residues. Residues 894–909 (DSGGSSDGNTGSSQTS) are compositionally biased toward low complexity. Composition is skewed to polar residues over residues 1096–1109 (GSTS…SSIP) and 1116–1125 (GPSTMTSQSV). Residues 1148-1158 (SQSQPSSEQPA) are compositionally biased toward low complexity. Residues 1188–1202 (QPQSTVTNTQTQDVL) are compositionally biased toward polar residues. Composition is skewed to low complexity over residues 1204-1226 (SQGS…KTGS) and 1233-1251 (KSAL…SGKS). Residues 1258-1276 (AASSTDPTTKPTRKVSINA) are compositionally biased toward polar residues. Residues 1284 to 1299 (KSSTKQSTKTSTQPSD) are compositionally biased toward low complexity. A coiled-coil region spans residues 1408 to 1438 (AEQIRNLEVDELKILRQQVRERIANERQQQD). The interval 1454–1483 (DMLVSEESAAPTPLPMDTGRFTPKSDVDMS) is disordered.

This chain is Protein ORF C, found in Elephantid herpesvirus 1 (isolate Asian elephant/Berlin/Kiba/1998) (EIHV-1).